Here is a 1403-residue protein sequence, read N- to C-terminus: DNA-directed RNA polymerase subunit beta' (1403 aa).

Zn(2+) is bound by residues Cys68, Cys70, Cys83, and Cys86. Mg(2+)-binding residues include Asp459, Asp461, and Asp463. Residues Cys814, Cys887, Cys894, and Cys897 each coordinate Zn(2+).

It belongs to the RNA polymerase beta' chain family. As to quaternary structure, the RNAP catalytic core consists of 2 alpha, 1 beta, 1 beta' and 1 omega subunit. When a sigma factor is associated with the core the holoenzyme is formed, which can initiate transcription. Requires Mg(2+) as cofactor. The cofactor is Zn(2+).

It carries out the reaction RNA(n) + a ribonucleoside 5'-triphosphate = RNA(n+1) + diphosphate. Its function is as follows. DNA-dependent RNA polymerase catalyzes the transcription of DNA into RNA using the four ribonucleoside triphosphates as substrates. The sequence is that of DNA-directed RNA polymerase subunit beta' from Solibacter usitatus (strain Ellin6076).